The primary structure comprises 953 residues: Translation initiation factor IF-2 (953 aa).

Disordered stretches follow at residues 48–212 (SSFS…KIDF) and 279–367 (TKLK…FHEL). 3 stretches are compositionally biased toward basic and acidic residues: residues 80-89 (TGSEHVEKTQ), 98-111 (FKAEREARAKEQAA), and 140-188 (QGDK…ENHK). Polar residues-rich tracts occupy residues 191-207 (RFTNQKKQGRQEPQSKS) and 282-291 (KSSNISAKST). Basic and acidic residues predominate over residues 300–317 (ARPEKNRELTHHSQEGQK). A compositionally biased stretch (low complexity) spans 322-338 (SWNSQNQVRNQKNSNWN). Basic residues predominate over residues 339 to 348 (KNKKTKKGKN). In terms of domain architecture, tr-type G spans 454–623 (ERAPVVTIMG…LLVAEVEELK (170 aa)). The segment at 463 to 470 (GHVDHGKT) is G1. Position 463-470 (463-470 (GHVDHGKT)) interacts with GTP. Positions 488–492 (GITQH) are G2. Residues 509-512 (DTPG) form a G3 region. GTP is bound by residues 509–513 (DTPGH) and 563–566 (NKID). The G4 stretch occupies residues 563-566 (NKID). The tract at residues 599 to 601 (SAK) is G5.

It belongs to the TRAFAC class translation factor GTPase superfamily. Classic translation factor GTPase family. IF-2 subfamily.

The protein localises to the cytoplasm. Functionally, one of the essential components for the initiation of protein synthesis. Protects formylmethionyl-tRNA from spontaneous hydrolysis and promotes its binding to the 30S ribosomal subunits. Also involved in the hydrolysis of GTP during the formation of the 70S ribosomal complex. The protein is Translation initiation factor IF-2 of Streptococcus pyogenes serotype M3 (strain ATCC BAA-595 / MGAS315).